We begin with the raw amino-acid sequence, 529 residues long: Interleukin-21 receptor (529 aa).

The N-terminal stretch at 1–19 (MPRGPVAALLLLILHGAWS) is a signal peptide. Disulfide bonds link C20–C109, C25–C35, and C65–C81. Over 20–237 (CLDLTCYTDY…GEPEAGWDPH (218 aa)) the chain is Extracellular. Fibronectin type-III domains are found at residues 21–118 (LDLT…AESI) and 119–228 (KPAP…TQAG). Residues N73, N97, N104, N125, and N182 are each glycosylated (N-linked (GlcNAc...) asparagine). C-linked (Man) tryptophan glycosylation is present at W214. A WSXWS motif motif is present at residues 214–218 (WSEWS). The helical transmembrane segment at 238–258 (MLLLLAVLIIVLVFMGLKIHL) threads the bilayer. The Cytoplasmic segment spans residues 259–529 (PWRLWKKIWA…PPVDSGAQSS (271 aa)). The Box 1 motif motif lies at 266-274 (IWAPVPTPE). The tract at residues 458–529 (TADPTWRTGS…PPVDSGAQSS (72 aa)) is disordered.

The protein belongs to the type I cytokine receptor family. Type 4 subfamily. Heterodimer with the common gamma subunit. Associates with JAK1. Post-translationally, C-mannosylated at Trp-214 in the WSXWS motif, the sugar chain makes extensive hydrogen bonds with Asn-73 sugar, and bridges the two fibronectin domains transforming the V-shaped receptor into an A-frame. As to expression, selectively expressed in lymphoid tissues. Most highly expressed in thymus and spleen.

Its subcellular location is the membrane. In terms of biological role, this is a receptor for interleukin-21. This Mus musculus (Mouse) protein is Interleukin-21 receptor (Il21r).